Reading from the N-terminus, the 531-residue chain is Cytochrome P450 monooxygenase ffsD (531 aa).

Residues 40–60 (VGALLGISLSVVLLLWVISVV) traverse the membrane as a helical segment. Heme is bound at residue Cys-475.

This sequence belongs to the cytochrome P450 family. Heme is required as a cofactor.

The protein resides in the membrane. The protein operates within mycotoxin biosynthesis. In terms of biological role, cytochrome P450 monooxygenase; part of the gene cluster that mediates the biosynthesis of the cytotoxic leucine-containing cytochalasans, including aspochalasin C, aspochalasin E, TMC-169, flavichalasine F, aspergillin PZ, aspochalasin M and flavichalasine G. The first step in the pathway is catalyzed by the hybrid PKS-NRPS ffsA that utilizes 8 units of malonyl-CoA to iteratively assemble the octaketide chain before addition of L-leucine by the C-terminal NRPS modules. Because ffsA lacks a designated enoylreductase (ER) domain, the required activity is provided the enoyl reductase fssC. The methyltransferase (MT) domain of ffsA catalyzes the alpha-methylation at C10 and C14 using S-adenosyl-L-methionine as the methyl-donating cosubstrate. Reduction by the hydrolyase ffsE, followed by dehydration and intra-molecular Diels-Alder cyclization by the Diels-Alderase ffsF then yield the required isoindolone-fused macrocycle. A number of oxidative steps catalyzed by the tailoring cytochrome P450 monooxygenase ffsD, the FAD-linked oxidoreductase ffsJ and the short-chain dehydrogenase/reductase ffsI, are further required to afford the final products. The sequence is that of Cytochrome P450 monooxygenase ffsD from Aspergillus flavipes.